The following is a 513-amino-acid chain: ATP synthase subunit alpha (513 aa).

172-179 (GDRQTGKT) contacts ATP.

This sequence belongs to the ATPase alpha/beta chains family. As to quaternary structure, F-type ATPases have 2 components, CF(1) - the catalytic core - and CF(0) - the membrane proton channel. CF(1) has five subunits: alpha(3), beta(3), gamma(1), delta(1), epsilon(1). CF(0) has three main subunits: a(1), b(2) and c(9-12). The alpha and beta chains form an alternating ring which encloses part of the gamma chain. CF(1) is attached to CF(0) by a central stalk formed by the gamma and epsilon chains, while a peripheral stalk is formed by the delta and b chains.

It localises to the cell inner membrane. The enzyme catalyses ATP + H2O + 4 H(+)(in) = ADP + phosphate + 5 H(+)(out). Produces ATP from ADP in the presence of a proton gradient across the membrane. The alpha chain is a regulatory subunit. The polypeptide is ATP synthase subunit alpha (Gluconacetobacter diazotrophicus (strain ATCC 49037 / DSM 5601 / CCUG 37298 / CIP 103539 / LMG 7603 / PAl5)).